We begin with the raw amino-acid sequence, 488 residues long: L-arabinose isomerase 1 (488 aa).

Mn(2+) contacts are provided by Glu306, Glu331, His348, and His447.

The protein belongs to the arabinose isomerase family. Mn(2+) serves as cofactor.

It catalyses the reaction beta-L-arabinopyranose = L-ribulose. Its pathway is carbohydrate degradation; L-arabinose degradation via L-ribulose; D-xylulose 5-phosphate from L-arabinose (bacterial route): step 1/3. In terms of biological role, catalyzes the conversion of L-arabinose to L-ribulose. This is L-arabinose isomerase 1 from Clostridium acetobutylicum (strain ATCC 824 / DSM 792 / JCM 1419 / IAM 19013 / LMG 5710 / NBRC 13948 / NRRL B-527 / VKM B-1787 / 2291 / W).